Consider the following 151-residue polypeptide: Large ribosomal subunit protein uL15 (151 aa).

Positions 1 to 60 (MAENSPLKAHNLRPAPGAKTAKTRVGRGEASKGKTAGRGTKGTKARYQVPERFEGGQMPL) are disordered.

This sequence belongs to the universal ribosomal protein uL15 family. In terms of assembly, part of the 50S ribosomal subunit.

Binds to the 23S rRNA. This chain is Large ribosomal subunit protein uL15, found in Streptomyces griseus subsp. griseus (strain JCM 4626 / CBS 651.72 / NBRC 13350 / KCC S-0626 / ISP 5235).